A 70-amino-acid chain; its full sequence is Putative membrane protein insertion efficiency factor (70 aa).

Belongs to the UPF0161 family.

It localises to the cell inner membrane. Could be involved in insertion of integral membrane proteins into the membrane. In Geobacter sp. (strain M21), this protein is Putative membrane protein insertion efficiency factor.